A 242-amino-acid chain; its full sequence is Biosynthetic peptidoglycan transglycosylase (242 aa).

A helical membrane pass occupies residues 19-39; that stretch reads LLLACAVLWGGGVALFSIVPV.

It belongs to the glycosyltransferase 51 family.

It is found in the cell inner membrane. The catalysed reaction is [GlcNAc-(1-&gt;4)-Mur2Ac(oyl-L-Ala-gamma-D-Glu-L-Lys-D-Ala-D-Ala)](n)-di-trans,octa-cis-undecaprenyl diphosphate + beta-D-GlcNAc-(1-&gt;4)-Mur2Ac(oyl-L-Ala-gamma-D-Glu-L-Lys-D-Ala-D-Ala)-di-trans,octa-cis-undecaprenyl diphosphate = [GlcNAc-(1-&gt;4)-Mur2Ac(oyl-L-Ala-gamma-D-Glu-L-Lys-D-Ala-D-Ala)](n+1)-di-trans,octa-cis-undecaprenyl diphosphate + di-trans,octa-cis-undecaprenyl diphosphate + H(+). It functions in the pathway cell wall biogenesis; peptidoglycan biosynthesis. Functionally, peptidoglycan polymerase that catalyzes glycan chain elongation from lipid-linked precursors. This chain is Biosynthetic peptidoglycan transglycosylase, found in Klebsiella oxytoca.